The chain runs to 260 residues: Scytalidopepsin B (260 aa).

The signal sequence occupies residues 1-20; sequence MKFTTAAVLSALVSAEIAFA. Residues 21 to 54 constitute a propeptide that is removed on maturation; the sequence is APGGNGFARRQARRQARAAGLKASPFRQVNAKEA. The cysteines at positions 101 and 181 are disulfide-linked. Glu190 serves as the catalytic Proton acceptor. Cystine bridges form between Cys195-Cys219 and Cys248-Cys257.

Belongs to the peptidase G1 family. In terms of assembly, monomer.

It carries out the reaction Hydrolysis of proteins with broad specificity, cleaving 24-Phe-|-Phe-25, but not 15-Leu-|-Tyr-16 and 25-Phe-|-Tyr-26 in the B chain of insulin.. This Scytalidium lignicola (Hyphomycete) protein is Scytalidopepsin B.